The sequence spans 72 residues: Exodeoxyribonuclease 7 small subunit (72 aa).

Belongs to the XseB family. In terms of assembly, heterooligomer composed of large and small subunits.

The protein resides in the cytoplasm. It carries out the reaction Exonucleolytic cleavage in either 5'- to 3'- or 3'- to 5'-direction to yield nucleoside 5'-phosphates.. Functionally, bidirectionally degrades single-stranded DNA into large acid-insoluble oligonucleotides, which are then degraded further into small acid-soluble oligonucleotides. In Clostridium kluyveri (strain NBRC 12016), this protein is Exodeoxyribonuclease 7 small subunit.